A 235-amino-acid polypeptide reads, in one-letter code: Regulator of G-protein signaling 18 (235 aa).

Ser-49 carries the post-translational modification Phosphoserine. Positions Ser-86–Ile-202 constitute an RGS domain. Phosphoserine occurs at positions 216 and 218.

It is found in the cytoplasm. Functionally, inhibits signal transduction by increasing the GTPase activity of G protein alpha subunits thereby driving them into their inactive GDP-bound form. Binds to G(i) alpha-1, G(i) alpha-2, G(i) alpha-3 and G(q) alpha. The polypeptide is Regulator of G-protein signaling 18 (Rgs18) (Rattus norvegicus (Rat)).